Reading from the N-terminus, the 629-residue chain is tRNA uridine 5-carboxymethylaminomethyl modification enzyme MnmG (629 aa).

An FAD-binding site is contributed by 13–18 (GGGHAG). Position 273-287 (273-287 (GPRYCPSIEDKVVRF)) interacts with NAD(+).

This sequence belongs to the MnmG family. Homodimer. Heterotetramer of two MnmE and two MnmG subunits. FAD serves as cofactor.

It is found in the cytoplasm. In terms of biological role, NAD-binding protein involved in the addition of a carboxymethylaminomethyl (cmnm) group at the wobble position (U34) of certain tRNAs, forming tRNA-cmnm(5)s(2)U34. This Nitrosococcus oceani (strain ATCC 19707 / BCRC 17464 / JCM 30415 / NCIMB 11848 / C-107) protein is tRNA uridine 5-carboxymethylaminomethyl modification enzyme MnmG.